A 141-amino-acid polypeptide reads, in one-letter code: Small ribosomal subunit protein uS9c (141 aa).

This sequence belongs to the universal ribosomal protein uS9 family.

The protein resides in the plastid. It is found in the chloroplast. This is Small ribosomal subunit protein uS9c (rps9) from Tupiella akineta (Green alga).